Reading from the N-terminus, the 1070-residue chain is Carbamoyl phosphate synthase large chain (1070 aa).

Positions 1–399 are carboxyphosphate synthetic domain; it reads MPKREDIKKV…SLLKAFKSLD (399 aa). Arg-129, Arg-169, Gly-175, Gly-176, Glu-208, Val-210, Glu-215, Gly-241, Val-242, His-243, Gln-284, and Glu-296 together coordinate ATP. The ATP-grasp 1 domain occupies 133–325; it reads KETMLRIGEK…IARVTAKIAI (193 aa). Gln-284, Glu-296, and Asn-298 together coordinate Mg(2+). The Mn(2+) site is built by Gln-284, Glu-296, and Asn-298. The interval 400 to 540 is oligomerization domain; it reads IDSQLGNKRW…YSTYEDTCET (141 aa). A carbamoyl phosphate synthetic domain region spans residues 541–931; sequence NPTDRKKILI…YKAELAADNL (391 aa). Residues 672–863 form the ATP-grasp 2 domain; that stretch reads YVLMQKFGIL…LAKIAARVIA (192 aa). Residues Arg-708, Asp-747, Leu-749, Glu-754, Gly-779, Val-780, His-781, Ser-782, Gln-822, and Glu-834 each coordinate ATP. Gln-822, Glu-834, and Asn-836 together coordinate Mg(2+). Mn(2+) contacts are provided by Gln-822, Glu-834, and Asn-836. In terms of domain architecture, MGS-like spans 930-1070; sequence NLLPLTGKVF…INEYHKEMGL (141 aa). The allosteric domain stretch occupies residues 932-1070; it reads LPLTGKVFLS…INEYHKEMGL (139 aa).

It belongs to the CarB family. In terms of assembly, composed of two chains; the small (or glutamine) chain promotes the hydrolysis of glutamine to ammonia, which is used by the large (or ammonia) chain to synthesize carbamoyl phosphate. Tetramer of heterodimers (alpha,beta)4. Mg(2+) is required as a cofactor. Mn(2+) serves as cofactor.

The catalysed reaction is hydrogencarbonate + L-glutamine + 2 ATP + H2O = carbamoyl phosphate + L-glutamate + 2 ADP + phosphate + 2 H(+). It catalyses the reaction hydrogencarbonate + NH4(+) + 2 ATP = carbamoyl phosphate + 2 ADP + phosphate + 2 H(+). It participates in amino-acid biosynthesis; L-arginine biosynthesis; carbamoyl phosphate from bicarbonate: step 1/1. It functions in the pathway pyrimidine metabolism; UMP biosynthesis via de novo pathway; (S)-dihydroorotate from bicarbonate: step 1/3. Its function is as follows. Large subunit of the glutamine-dependent carbamoyl phosphate synthetase (CPSase). CPSase catalyzes the formation of carbamoyl phosphate from the ammonia moiety of glutamine, carbonate, and phosphate donated by ATP, constituting the first step of 2 biosynthetic pathways, one leading to arginine and/or urea and the other to pyrimidine nucleotides. The large subunit (synthetase) binds the substrates ammonia (free or transferred from glutamine from the small subunit), hydrogencarbonate and ATP and carries out an ATP-coupled ligase reaction, activating hydrogencarbonate by forming carboxy phosphate which reacts with ammonia to form carbamoyl phosphate. This Methanosarcina acetivorans (strain ATCC 35395 / DSM 2834 / JCM 12185 / C2A) protein is Carbamoyl phosphate synthase large chain.